The following is a 200-amino-acid chain: Adenylate kinase (200 aa).

11-16 (GAGKGT) contacts ATP. The interval 31–60 (STGDIFRQNIKDRTELGQQVQALVDAGNYV) is NMP. Residues Thr32, Arg37, 58–60 (NYV), 86–89 (GYPR), and Gln93 each bind AMP. Residues 127-137 (RRAAEQGRADD) are LID. Residue Arg128 participates in ATP binding. Residues Arg134 and Arg145 each coordinate AMP. An ATP-binding site is contributed by Gly173.

This sequence belongs to the adenylate kinase family. As to quaternary structure, monomer.

It is found in the cytoplasm. It carries out the reaction AMP + ATP = 2 ADP. It participates in purine metabolism; AMP biosynthesis via salvage pathway; AMP from ADP: step 1/1. In terms of biological role, catalyzes the reversible transfer of the terminal phosphate group between ATP and AMP. Plays an important role in cellular energy homeostasis and in adenine nucleotide metabolism. In Clavibacter michiganensis subsp. michiganensis (strain NCPPB 382), this protein is Adenylate kinase.